Consider the following 318-residue polypeptide: MYAREYRSTRPHKAIFFHLSCLTLICSAQVYAKPDMRPLGPNIADKGSVFYHFSATSFDSVDGTRHYRVWTAVPNTTAPASGYPILYMLDGNAVMDRLDDELLKQLSEKTPPVIVAVGYQTNLPFDLNSRAYDYTPAAESRKTDLHSGRFSRKSGGSNNFRQLLETRIAPKVEQGLNIDRQRRGLWGHSYGGLFVLDSWLSSSYFRSYYSASPSLGRGYDALLSRVTAVEPLQFCTKHLAIMEGSATQGDNRETHAVGVLSKIHTTLTILKDKGVNAVFWDFPNLGHGPMFNASFRQALLDISGENANYTAGCHELSH.

A helical transmembrane segment spans residues 13-32; the sequence is KAIFFHLSCLTLICSAQVYA. Residues Ser-189 and His-287 contribute to the active site.

It belongs to the esterase D family. Monomer.

It localises to the cell inner membrane. The catalysed reaction is enterobactin + H2O = N-(2,3-dihydroxybenzoyl)-L-serine trimer. It carries out the reaction monoglucosyl-enterobactin + H2O = [N-(2,3-dihydroxybenzoyl)-L-seryl]2-N-(C-5-[deoxy-beta-D-glucosyl]-2,3-dihydroxybenzoyl)-L-serine + H(+). It catalyses the reaction diglucosyl-enterobactin + H2O = N-(2,3-dihydroxybenzoyl)-L-seryl-[N-(C-5-[deoxy-beta-D-glucosyl]-2,3-dihydroxybenzoyl)-L-serine]2 + H(+). The enzyme catalyses triglucosyl-enterobactin + H2O = [N-(C-5-[deoxy-beta-D-glucosyl]-2,3-dihydroxybenzoyl)-L-serine]3 + H(+). In terms of biological role, catalyzes the hydrolysis of both the apo and Fe3(+)-bound forms of enterobactin (Ent), monoglucosyl-C-Ent (MGE), diglucosyl-C-Ent (DGE) and triglucosyl-C-Ent (TGE). It prefers apo siderophores as substrates and hydrolyzes the Fe3(+)-bound siderophores very inefficiently. Tends to hydrolyze the trilactone just once to produce linearized trimers. May hydrolyze and linearize some or all of apo enterobactins while they are being exported. This Escherichia coli O6:H1 (strain CFT073 / ATCC 700928 / UPEC) protein is Apo-salmochelin esterase.